A 399-amino-acid chain; its full sequence is 3-methyl-2-oxobutanoate hydroxymethyltransferase 2, mitochondrial (399 aa).

Residues 1–90 (MSFSRLLTPR…ARRVTLATLR (90 aa)) constitute a mitochondrion transit peptide. Mg(2+)-binding residues include Asp125 and Asp164. 3-methyl-2-oxobutanoate-binding positions include 125 to 126 (DS), Asp164, and Lys194. Position 196 (Glu196) interacts with Mg(2+). Glu264 (proton acceptor) is an active-site residue.

It belongs to the PanB family. Mg(2+) serves as cofactor.

It localises to the mitochondrion. It catalyses the reaction 3-methyl-2-oxobutanoate + (6R)-5,10-methylene-5,6,7,8-tetrahydrofolate + H2O = 2-dehydropantoate + (6S)-5,6,7,8-tetrahydrofolate. The protein operates within cofactor biosynthesis; (R)-pantothenate biosynthesis; (R)-pantoate from 3-methyl-2-oxobutanoate: step 1/2. Functionally, catalyzes the reversible reaction in which hydroxymethyl group from 5,10-methylenetetrahydrofolate is transferred onto alpha-ketoisovalerate to form ketopantoate. The polypeptide is 3-methyl-2-oxobutanoate hydroxymethyltransferase 2, mitochondrial (KPHMT2) (Oryza sativa subsp. japonica (Rice)).